A 185-amino-acid polypeptide reads, in one-letter code: Threonylcarbamoyl-AMP synthase (185 aa).

Positions 4 to 185 (SWRVQQAAQD…IATGQVMRAG (182 aa)) constitute a YrdC-like domain.

The protein belongs to the SUA5 family. TsaC subfamily.

The protein resides in the cytoplasm. It catalyses the reaction L-threonine + hydrogencarbonate + ATP = L-threonylcarbamoyladenylate + diphosphate + H2O. Functionally, required for the formation of a threonylcarbamoyl group on adenosine at position 37 (t(6)A37) in tRNAs that read codons beginning with adenine. Catalyzes the conversion of L-threonine, HCO(3)(-)/CO(2) and ATP to give threonylcarbamoyl-AMP (TC-AMP) as the acyladenylate intermediate, with the release of diphosphate. The sequence is that of Threonylcarbamoyl-AMP synthase from Pseudomonas savastanoi pv. phaseolicola (strain 1448A / Race 6) (Pseudomonas syringae pv. phaseolicola (strain 1448A / Race 6)).